A 422-amino-acid polypeptide reads, in one-letter code: Glyceraldehyde-3-phosphate dehydrogenase GAPCP1, chloroplastic (422 aa).

The N-terminal 69 residues, 1-69 (MAFSSLLRSA…NARSVQPIKA (69 aa)), are a transit peptide targeting the chloroplast. The segment covering 50-63 (SGISSSLQNGNARS) has biased composition (polar residues). The interval 50-84 (SGISSSLQNGNARSVQPIKATATEVPSAVRRSSSS) is disordered. N-acetylthreonine is present on Thr-70. NAD(+) is bound by residues 96–97 (RI), Asp-118, and Arg-164. Residues 235–237 (SCT), Thr-266, 295–296 (TG), and Arg-318 contribute to the D-glyceraldehyde 3-phosphate site. Cys-236 functions as the Nucleophile in the catalytic mechanism. Asn-400 is a binding site for NAD(+).

The protein belongs to the glyceraldehyde-3-phosphate dehydrogenase family. As to quaternary structure, homotetramer. Expressed in shoot and root vasculature, leaf veins and vascular tissue of flowers and siliques.

The protein localises to the plastid. The protein resides in the chloroplast stroma. The enzyme catalyses D-glyceraldehyde 3-phosphate + phosphate + NAD(+) = (2R)-3-phospho-glyceroyl phosphate + NADH + H(+). Involved in plastidial glycolytic pathway and plays a specific role in glycolytic energy production in non-green plastids and chloroplasts. Essential for breakdown of starch to form sucrose for export to non-photosynthetic tissues, and to generate primary metabolites for anabolic pathways such as fatty acid and amino acid synthesis. Plays an important role in plant development by providing substrates for the phosphorylated pathway of serine biosynthesis in roots. Plays a crucial role in pollen development. Functionally redundant with GAPCP2. The protein is Glyceraldehyde-3-phosphate dehydrogenase GAPCP1, chloroplastic (GAPCP1) of Arabidopsis thaliana (Mouse-ear cress).